The following is a 235-amino-acid chain: Ubiquinone biosynthesis O-methyltransferase (235 aa).

Residues arginine 39, glycine 59, aspartate 80, and methionine 124 each coordinate S-adenosyl-L-methionine.

The protein belongs to the methyltransferase superfamily. UbiG/COQ3 family.

The enzyme catalyses a 3-demethylubiquinol + S-adenosyl-L-methionine = a ubiquinol + S-adenosyl-L-homocysteine + H(+). It catalyses the reaction a 3-(all-trans-polyprenyl)benzene-1,2-diol + S-adenosyl-L-methionine = a 2-methoxy-6-(all-trans-polyprenyl)phenol + S-adenosyl-L-homocysteine + H(+). The protein operates within cofactor biosynthesis; ubiquinone biosynthesis. O-methyltransferase that catalyzes the 2 O-methylation steps in the ubiquinone biosynthetic pathway. The protein is Ubiquinone biosynthesis O-methyltransferase of Vibrio vulnificus (strain CMCP6).